The primary structure comprises 106 residues: Translation initiation factor 1A 2 (106 aa).

Positions 1 to 24 (MRKRREGTANNSPTPEVTRVRTPR) are disordered. The 75-residue stretch at 18 to 92 (TRVRTPRKEN…SKADVIWKYT (75 aa)) folds into the S1-like domain.

Belongs to the eIF-1A family.

Seems to be required for maximal rate of protein biosynthesis. Enhances ribosome dissociation into subunits and stabilizes the binding of the initiator Met-tRNA(I) to 40 S ribosomal subunits. This is Translation initiation factor 1A 2 (eIF1A2) from Methanosarcina mazei (strain ATCC BAA-159 / DSM 3647 / Goe1 / Go1 / JCM 11833 / OCM 88) (Methanosarcina frisia).